A 239-amino-acid polypeptide reads, in one-letter code: MQLWVGLGNPGAKYAGNRHNIGWMAVDRVAEDHGFAPWRAKFQGEVSEGVLDGEKVLLLKPTTFMNLSGQSVGEAMRFYKLDSTDVTVWHDEIDLAPAKIRVKAGGGHAGHNGLRSIHQHIGPHYDRVRLGVGHPGHKDRVPGYVLSDFAKADAGWLDDVLRGVSDGAPHLARGDGGKFLNAVALRVAPPRSSTSKPKAQDNREDAAQAAEERSETRTPPEARPEDTRSALQKLADKFR.

Tyr14 contributes to the tRNA binding site. Catalysis depends on His19, which acts as the Proton acceptor. Residues Phe64, Asn66, and Asn112 each contribute to the tRNA site. Residues 188–239 (APPRSSTSKPKAQDNREDAAQAAEERSETRTPPEARPEDTRSALQKLADKFR) are disordered. Basic and acidic residues predominate over residues 198–239 (KAQDNREDAAQAAEERSETRTPPEARPEDTRSALQKLADKFR).

This sequence belongs to the PTH family. As to quaternary structure, monomer.

The protein localises to the cytoplasm. The enzyme catalyses an N-acyl-L-alpha-aminoacyl-tRNA + H2O = an N-acyl-L-amino acid + a tRNA + H(+). Its function is as follows. Hydrolyzes ribosome-free peptidyl-tRNAs (with 1 or more amino acids incorporated), which drop off the ribosome during protein synthesis, or as a result of ribosome stalling. Functionally, catalyzes the release of premature peptidyl moieties from peptidyl-tRNA molecules trapped in stalled 50S ribosomal subunits, and thus maintains levels of free tRNAs and 50S ribosomes. This chain is Peptidyl-tRNA hydrolase, found in Jannaschia sp. (strain CCS1).